A 214-amino-acid polypeptide reads, in one-letter code: MANKKIPRATAKRLPIYFRYLNVLKDANKQRVSSTELSEAVQVDSATIRRDFSYFGELGKRGYGYDVESLLKFFKGILHQDSLVSVALVGVGSLGSALLNFNFHQDTNLRISAAFDTKPEYANTVKSGIPIYPSEDMVKQLKEQQIDVVILTVPGIKAQHVADQLVEAGVKGILNFTPVRLSVPKNVQVQNIDLTNELQTLIYFIKNYTEDSIK.

A DNA-binding region (H-T-H motif) is located at residues 16–55 (IYFRYLNVLKDANKQRVSSTELSEAVQVDSATIRRDFSYF). Position 90-95 (90-95 (GVGSLG)) interacts with NAD(+).

The protein belongs to the transcriptional regulatory Rex family. In terms of assembly, homodimer.

Its subcellular location is the cytoplasm. Modulates transcription in response to changes in cellular NADH/NAD(+) redox state. This is Redox-sensing transcriptional repressor Rex from Limosilactobacillus reuteri (strain DSM 20016) (Lactobacillus reuteri).